The sequence spans 434 residues: MIKLTKAEKNGLHGEITVPGDKSISHRALMFGAIAEGKTVIDNFLMSDDVMHTMGVFRALGVEIDHTESQATVIGKGLTNFKAPSAGLDMGNSGTSTRLLMGLLSKQPFDLNIFGDSSLSKRPLRRVADPLSMMNAQFELSNDEFLPAVIKANTELNGITYHMPVASAQVKSAILLAGIQAEGETTIIEDLPSRDHTERMLRQFGGQIKTDNGVITVKKQSKLSGQHVLVPSDISSAAFFMVAGLITPNSEITIKKVGVNPTRDGVIKLLERMGAEITQKPIASDGEPLADITVKAQTLHGIAITAEDIPGAVDELPILALAATQAVGDTIISGAEELRVKETDRISTVISELTKLGADIDEKPDGMVIHGGTLLHTSNGSTLLDSHGDHRIGMMNVIASLITEGDVVLTGEEAMSVSYPGFVEDVSSIKREWL.

3-phosphoshikimate-binding residues include Lys-22, Ser-23, and Arg-27. Lys-22 provides a ligand contact to phosphoenolpyruvate. Residues Gly-94 and Arg-122 each coordinate phosphoenolpyruvate. The 3-phosphoshikimate site is built by Ser-167, Gln-169, Asp-314, and Lys-341. Gln-169 serves as a coordination point for phosphoenolpyruvate. Asp-314 functions as the Proton acceptor in the catalytic mechanism. Residues Arg-345 and Arg-391 each coordinate phosphoenolpyruvate.

This sequence belongs to the EPSP synthase family. As to quaternary structure, monomer.

It is found in the cytoplasm. The enzyme catalyses 3-phosphoshikimate + phosphoenolpyruvate = 5-O-(1-carboxyvinyl)-3-phosphoshikimate + phosphate. It participates in metabolic intermediate biosynthesis; chorismate biosynthesis; chorismate from D-erythrose 4-phosphate and phosphoenolpyruvate: step 6/7. Functionally, catalyzes the transfer of the enolpyruvyl moiety of phosphoenolpyruvate (PEP) to the 5-hydroxyl of shikimate-3-phosphate (S3P) to produce enolpyruvyl shikimate-3-phosphate and inorganic phosphate. The chain is 3-phosphoshikimate 1-carboxyvinyltransferase from Leuconostoc mesenteroides subsp. mesenteroides (strain ATCC 8293 / DSM 20343 / BCRC 11652 / CCM 1803 / JCM 6124 / NCDO 523 / NBRC 100496 / NCIMB 8023 / NCTC 12954 / NRRL B-1118 / 37Y).